The primary structure comprises 2596 residues: Cadherin EGF LAG seven-pass G-type receptor fmi-1 (2596 aa).

An N-terminal signal peptide occupies residues 1-22; that stretch reads MMLDRIMFLLFFILSLVIGSFS. Residues 23 to 2229 are Extracellular-facing; that stretch reads EYLDDKYYST…IVRVAQMDNM (2207 aa). Cadherin domains are found at residues 166–270, 271–375, 376–479, 480–581, 582–682, 683–784, 785–892, and 893–1000; these read QQEK…SPIF, EKDS…APVF, ASDS…APTL, IAAQ…APTF, DKKE…APYF, NDHP…SPQF, TSSS…APTF, and EQLS…KPAL. Residues Asn-381, Asn-387, Asn-562, Asn-587, Asn-765, and Asn-824 are each glycosylated (N-linked (GlcNAc...) asparagine). N-linked (GlcNAc...) asparagine glycans are attached at residues Asn-1030 and Asn-1263. Positions 1251–1287 constitute an EGF-like 1 domain; that stretch reads RIDECYRGRCSNNSTCVAFENTYQCECKPGWIGRHCE. 12 cysteine pairs are disulfide-bonded: Cys-1255–Cys-1266, Cys-1260–Cys-1275, Cys-1277–Cys-1286, Cys-1497–Cys-1526, Cys-1533–Cys-1546, Cys-1540–Cys-1555, Cys-1557–Cys-1567, Cys-1709–Cys-1732, Cys-1738–Cys-1750, Cys-1744–Cys-1759, Cys-1761–Cys-1770, and Cys-1780–Cys-1785. A Laminin G-like 1 domain is found at 1333 to 1526; sequence SVSFDGEGLL…HKVGQVHEGC (194 aa). Residues 1529-1568 enclose the EGF-like 2 domain; the sequence is RKDFCSTSDGQCSATSKCVNRWGGRICSCPQSVHSTGECV. Residues 1577–1732 form the Laminin G-like 2 domain; that stretch reads RGHSLFEEES…KKKGKTRAGC (156 aa). EGF-like domains follow at residues 1734–1771 and 1776–1808; these read VPNRCSVDSICPAESTCHRAWNKHKCKCHKSFVGDTCL and VANVCSSGTCVSSNTTAGYECICPAGKTGKNCQ. A glycan (N-linked (GlcNAc...) asparagine) is linked at Asn-1789. A disulfide bond links Cys-1798 and Cys-1807. Residues Asn-1965, Asn-1992, Asn-2152, Asn-2195, and Asn-2228 are each glycosylated (N-linked (GlcNAc...) asparagine). The 166-residue stretch at 2054 to 2219 folds into the GAIN-B domain; it reads EYSTLISKLW…TMFVNDQSSS (166 aa). Cys-2174 and Cys-2201 are joined by a disulfide. The tract at residues 2174 to 2219 is GPS; it reads CVRFDEKSGTWTARGAALIGLNLTHAACEYNRIGVFTMFVNDQSSS. A helical membrane pass occupies residues 2230–2250; that stretch reads TSPAIAGVALFLCFLSILLTL. The Cytoplasmic portion of the chain corresponds to 2251-2261; that stretch reads SRRSLKTHSVR. A helical membrane pass occupies residues 2262-2282; that stretch reads IGFILFFAINILNLFFVHKTA. At 2283-2292 the chain is on the extracellular side; the sequence is INQAYCPVRN. The helical transmembrane segment at 2293-2313 threads the bilayer; the sequence is AMLSFTSSAPFAWLFLYGLYI. Residues 2314-2326 are Cytoplasmic-facing; the sequence is YRMLADGSSSPSL. The chain crosses the membrane as a helical span at residues 2327-2347; sequence TTSLLVGIVFPCLISFTTFFV. Over 2348 to 2356 the chain is Extracellular; the sequence is TDQCSLSPH. Residues 2357 to 2377 traverse the membrane as a helical segment; that stretch reads LWLFWCIILPIGLFLLLSFYA. Topologically, residues 2378–2401 are cytoplasmic; that stretch reads AATSVLVSLHKKYDVFVAKYNVKR. A helical membrane pass occupies residues 2402 to 2422; that stretch reads AVFQHFILTIFTLGMTLTGLF. Residues 2423-2437 are Extracellular-facing; the sequence is ANQLPLPMEIMEISQ. A helical transmembrane segment spans residues 2438 to 2458; the sequence is SIIYLIAALVIFLWCVCDITT. Over 2459-2596 the chain is Cytoplasmic; that stretch reads KASDSNPSMW…KNTTSTFNRE (138 aa).

The protein belongs to the G-protein coupled receptor 2 family. LN-TM7 subfamily. As to expression, expressed in a region of neuropil around the nerve ring and the ventral cord (at protein level). Expressed in the head, tail, ventral cord, nerve ring and neurons including HSN neurons. Expressed in DA, VA, and VB and weakly in the DB cholinergic neurons. Not expressed in ventral D-type GABAergic motorneurons.

It is found in the cell membrane. Its subcellular location is the cell projection. The protein localises to the axon. It localises to the dendrite. In terms of biological role, during ventral cord development, required for axon fasciculation and navigation, mediating both pioneer and follower axon extension, guidance and track formation. Acts in CEPsh glia and SubL neurons to guide follower axons into the nerve ring. Promotes motorneuron development by positively regulating the extension of the anterior neurite of ventral D-type GABAergic motorneurons along the anterior-posterior axis of the ventral nerve cord. Plays a role in synaptogenesis by regulating synaptic vesicle accumulation at GABAergic and cholinergic neuromuscular junctions. This is Cadherin EGF LAG seven-pass G-type receptor fmi-1 from Caenorhabditis elegans.